Reading from the N-terminus, the 430-residue chain is Phosphomethylpyrimidine synthase (430 aa).

Residues Asn-68, Met-96, Tyr-125, His-164, 186 to 188 (SRG), 227 to 230 (DALR), and Glu-266 each bind substrate. His-270 provides a ligand contact to Zn(2+). Tyr-293 contacts substrate. Position 334 (His-334) interacts with Zn(2+). [4Fe-4S] cluster is bound by residues Cys-410, Cys-413, and Cys-417.

It belongs to the ThiC family. It depends on [4Fe-4S] cluster as a cofactor.

It carries out the reaction 5-amino-1-(5-phospho-beta-D-ribosyl)imidazole + S-adenosyl-L-methionine = 4-amino-2-methyl-5-(phosphooxymethyl)pyrimidine + CO + 5'-deoxyadenosine + formate + L-methionine + 3 H(+). It functions in the pathway cofactor biosynthesis; thiamine diphosphate biosynthesis. Functionally, catalyzes the synthesis of the hydroxymethylpyrimidine phosphate (HMP-P) moiety of thiamine from aminoimidazole ribotide (AIR) in a radical S-adenosyl-L-methionine (SAM)-dependent reaction. The chain is Phosphomethylpyrimidine synthase from Pyrobaculum aerophilum (strain ATCC 51768 / DSM 7523 / JCM 9630 / CIP 104966 / NBRC 100827 / IM2).